An 824-amino-acid polypeptide reads, in one-letter code: DNA replication helicase (824 aa).

90-97 (GTAGAGKT) contributes to the ATP binding site.

It belongs to the herpesviridae helicase family. In terms of assembly, associates with the primase and the primase-associated factor to form the helicase-primase complex.

The protein resides in the host nucleus. Its function is as follows. Component of the helicase/primase complex. Unwinds the DNA at the replication forks and generates single-stranded DNA for both leading and lagging strand synthesis. The primase synthesizes short RNA primers on the lagging strand that the polymerase elongates using dNTPs. Possesses helicase-like motifs and therefore may act as the helicase subunit of the complex. This Human herpesvirus 6B (strain Z29) (HHV-6 variant B) protein is DNA replication helicase.